The chain runs to 855 residues: Inactive rhomboid protein 1 (855 aa).

Positions 1–36 (MSEARRDSTSSLQRKKPPWLKLDIPSAVPPTAEEPS) are disordered. At 1 to 411 (MSEARRDSTS…HRPFFTYWLT (411 aa)) the chain is on the cytoplasmic side. Phosphoserine is present on residues S76 and S176. Phosphothreonine is present on residues T180 and T183. Residue S390 is modified to Phosphoserine. Residues 412-432 (FVHSLVTILAVCIYGIAPVGF) form a helical membrane-spanning segment. The Lumenal segment spans residues 433–655 (SQHETVDSVL…NPEVPDQFYR (223 aa)). N-linked (GlcNAc...) asparagine glycosylation is present at N583. A helical transmembrane segment spans residues 656–676 (LWLSLFLHAGILHCLVSICFQ). The Cytoplasmic segment spans residues 677-691 (MTVLRDLEKLAGWHR). A helical membrane pass occupies residues 692–712 (IAIIYLLSGVTGNLASAIFLP). At 713-714 (YR) the chain is on the lumenal side. Residues 715 to 735 (AEVGPAGSQFGILACLFVELF) form a helical membrane-spanning segment. The Cytoplasmic portion of the chain corresponds to 736–746 (QSWQILARPWR). A helical membrane pass occupies residues 747–767 (AFFKLLAVVLFLFTFGLLPWI). Topologically, residues 768-772 (DNFAH) are lumenal. Residues 773–793 (ISGFISGLFLSFAFLPYISFG) traverse the membrane as a helical segment. Topologically, residues 794-803 (KFDLYRKRCQ) are cytoplasmic. Residues 804 to 824 (IIIFQVVFLGLLAGLVVLFYF) form a helical membrane-spanning segment. The Lumenal segment spans residues 825–855 (YPVRCEWCEFLTCIPFTDKFCEKYELDAQLH).

This sequence belongs to the peptidase S54 family. Homodimer, or homooligomer. Interacts with TGFA and HBEGF. Interacts with EGF; may retain EGF in the endoplasmic reticulum and regulates its degradation through the endoplasmic reticulum-associated degradation (ERAD). Interacts (via cytoplasmic N-terminus) with FRMD8/iTAP; this interaction leads to mutual protein stabilization. Interacts with ADAM17/TACE.

It is found in the endoplasmic reticulum membrane. It localises to the golgi apparatus membrane. Its function is as follows. Regulates ADAM17 protease, a sheddase of the epidermal growth factor (EGF) receptor ligands and TNF, thereby plays a role in sleep, cell survival, proliferation, migration and inflammation. Does not exhibit any protease activity on its own. This is Inactive rhomboid protein 1 (RHBDF1) from Papio anubis (Olive baboon).